Consider the following 351-residue polypeptide: Chorismate synthase (351 aa).

The tract at residues 39-60 is disordered; the sequence is EDIQRDLERRRPGKRLTSPRGE. NADP(+) contacts are provided by Arg48 and Arg53. FMN contacts are provided by residues 124–126, Ala276, 291–295, and Arg317; these read RSS and KPIPS.

The protein belongs to the chorismate synthase family. In terms of assembly, homotetramer. It depends on FMNH2 as a cofactor.

The catalysed reaction is 5-O-(1-carboxyvinyl)-3-phosphoshikimate = chorismate + phosphate. The protein operates within metabolic intermediate biosynthesis; chorismate biosynthesis; chorismate from D-erythrose 4-phosphate and phosphoenolpyruvate: step 7/7. Functionally, catalyzes the anti-1,4-elimination of the C-3 phosphate and the C-6 proR hydrogen from 5-enolpyruvylshikimate-3-phosphate (EPSP) to yield chorismate, which is the branch point compound that serves as the starting substrate for the three terminal pathways of aromatic amino acid biosynthesis. This reaction introduces a second double bond into the aromatic ring system. The sequence is that of Chorismate synthase from Syntrophobacter fumaroxidans (strain DSM 10017 / MPOB).